The primary structure comprises 445 residues: Anthranilate N-benzoyltransferase protein 3 (445 aa).

Residues His164 and Asp392 each act as proton acceptor in the active site.

The protein belongs to the plant acyltransferase family. Post-translationally, N-terminus is blocked.

The enzyme catalyses anthranilate + benzoyl-CoA = N-benzoylanthranilate + CoA. The protein operates within phytoalexin biosynthesis; methoxydianthramide B biosynthesis. Its function is as follows. Catalyzes the formation of N-benzoylanthranilate, in the course of methoxydianthramide B, a phytoalexin. Phytoalexins are produced in response to infection by parasites, and are essential for the expression of disease resistance. The protein is Anthranilate N-benzoyltransferase protein 3 (HCBT3) of Dianthus caryophyllus (Carnation).